Consider the following 339-residue polypeptide: Terpene synthase 9 (339 aa).

Positions 79–84 match the DDxx(x)D/E motif motif; the sequence is DDFLES. Positions 219–227 match the NDxxSxxxD/E motif motif; it reads NDCASYAKE.

It belongs to the terpene synthase family.

The enzyme catalyses (2E,6E)-farnesyl diphosphate = (-)-beta-barbatene + diphosphate. It catalyses the reaction (2E,6E)-farnesyl diphosphate = (E)-beta-farnesene + diphosphate. The catalysed reaction is (2E)-geranyl diphosphate = (Z)-beta-ocimene + diphosphate. It carries out the reaction (2E)-geranyl diphosphate + H2O = linalool + diphosphate. The enzyme catalyses (2E)-geranyl diphosphate = beta-myrcene + diphosphate. In terms of biological role, terpene synthase that converts its substrate farnesyl diphosphate (FPP) into the sesquiterpene beta-barbatene as a major product as well as (E)-beta-farnesene as a minor product. Is also able to convert geranyl diphosphate (GPP) into a mixture of monoterpenes including (Z)-beta-ocimene, linalool, beta-myrcene, limonene and alpha-terpineol. This chain is Terpene synthase 9, found in Dictyostelium discoideum (Social amoeba).